Reading from the N-terminus, the 694-residue chain is Nucleolin (694 aa).

The interval 1-277 (MVKLAKTPKN…EAKKKKTETP (277 aa)) is disordered. Residues 26–40 (ESEEEESSDLEESSG) show a composition bias toward acidic residues. Positions 46 to 108 (PPKKQQKAAV…AVVGKGAKNG (63 aa)) are enriched in low complexity. Tandem repeats lie at residues 55–61 (VTPAKKA), 62–68 (ATPAKKA), 69–75 (ATPAKKA), 76–82 (VTPAKKA), and 84–90 (ATPAKKA). Residues 55-90 (VTPAKKAATPAKKAATPAKKAVTPAKKAVATPAKKA) form a 5 X 7 AA tandem repeats of X-T-P-X-K-K-X region. Phosphoserine is present on residues serine 116 and serine 136. The span at 116-142 (SEEEDEDDEDDEEDEDEEEESDEEEEP) shows a compositional bias: acidic residues. Residues 143–168 (AVPVKPAAKKSAAAVPAKKPAVVPAK) are compositionally biased toward low complexity. Serine 171 is modified (phosphoserine). Over residues 171–194 (SEEEEEEDDEEEDEEDDESEDEAM) the composition is skewed to acidic residues. Residues 196-213 (TTPAPVKKPTPAKATPAK) are compositionally biased toward low complexity. Residues 218 to 246 (SEDEEDEEDEDEDEEDEDDEEEDEEESED) are compositionally biased toward acidic residues. 4 RRM domains span residues 281-357 (FSLF…KAKS), 371-445 (RTLF…YTGE), 461-535 (KTLI…FSSP), and 553-628 (KTLF…FAKP). The segment at 631 to 694 (EFQRGGGFGG…KPQGKKIKFE (64 aa)) is disordered. Gly residues predominate over residues 633-680 (QRGGGFGGGFGGRGGRGGRGGGRGGFGGRGGGRGFGGRGGGFRGGRGG). Basic and acidic residues predominate over residues 681–694 (GGDHKPQGKKIKFE).

Post-translationally, highly phosphorylated during mitosis.

Its subcellular location is the nucleus. It localises to the nucleolus. Functionally, nucleolin is the major nucleolar protein of growing eukaryotic cells. It is found associated with intranucleolar chromatin and pre-ribosomal particles. It induces chromatin decondensation by binding to histone H1. It is thought to play a role in pre-rRNA transcription and ribosome assembly. The protein is Nucleolin (NCL) of Gallus gallus (Chicken).